We begin with the raw amino-acid sequence, 70 residues long: Deleted in esophageal cancer 1 (70 aa).

As to expression, expressed in many tissues, with highest expression in prostate and testis. Reduced expression in esophageal carcinomas.

Candidate tumor suppressor. The protein is Deleted in esophageal cancer 1 of Homo sapiens (Human).